The chain runs to 228 residues: MSVSEIFVELQGFLAAEQDIREEIRKVVQSLEQTAREILTLLQGVHQGAGFQDIPKRCLKAREHFGTVKTHLTSLKTKFPAEQYYRFHEHWRFVLQRLVFLAAFVVYLESETLVTREAVTEILGIEPDREKGFHLDVEDYLSGVLILASELSRLSVNSVTAGDYSRPLHISTFINELDSGFRLLNLKNDSLRKRYDGLKYDVKKVEEVVYDLSIRGFNKETAAACVEK.

The DNA/RNA binding stretch occupies residues Arg-86–His-90. The interval Leu-177–Leu-198 is leucine-zipper. N6-acetyllysine is present on Lys-187. Ser-190 bears the Phosphoserine mark. Lys-199 carries the N6-acetyllysine modification.

The protein belongs to the translin family. Ring-shaped heterooctamer of six TSN and two TSNAX subunits, DNA/RNA binding occurs inside the ring.

It localises to the cytoplasm. The protein resides in the nucleus. DNA-binding protein that specifically recognizes consensus sequences at the breakpoint junctions in chromosomal translocations, mostly involving immunoglobulin (Ig)/T-cell receptor gene segments. Seems to recognize single-stranded DNA ends generated by staggered breaks occurring at recombination hot spots. Its function is as follows. Exhibits both single-stranded and double-stranded endoribonuclease activity. May act as an activator of RNA-induced silencing complex (RISC) by facilitating endonucleolytic cleavage of the siRNA passenger strand. The protein is Translin (TSN) of Bos taurus (Bovine).